Here is a 348-residue protein sequence, read N- to C-terminus: Phosphate acyltransferase (348 aa).

The protein belongs to the PlsX family. In terms of assembly, homodimer. Probably interacts with PlsY.

The protein resides in the cytoplasm. The catalysed reaction is a fatty acyl-[ACP] + phosphate = an acyl phosphate + holo-[ACP]. It participates in lipid metabolism; phospholipid metabolism. Catalyzes the reversible formation of acyl-phosphate (acyl-PO(4)) from acyl-[acyl-carrier-protein] (acyl-ACP). This enzyme utilizes acyl-ACP as fatty acyl donor, but not acyl-CoA. The polypeptide is Phosphate acyltransferase (Neisseria gonorrhoeae (strain ATCC 700825 / FA 1090)).